The chain runs to 343 residues: Transcription factor MYB83 (343 aa).

Over residues 1–16 the composition is skewed to basic and acidic residues; sequence MMMRKPDITTIRDKGK. Positions 1–33 are disordered; sequence MMMRKPDITTIRDKGKPNHACGGNNNKPKLRKG. 2 HTH myb-type domains span residues 27–79 and 80–134; these read KPKL…INYL and RPDL…KKRL. DNA-binding regions (H-T-H motif) lie at residues 55 to 79 and 107 to 130; these read WSDIARNAGLLRCGKSCRLRWINYL and WSQIATRLPGRTDNEIKNFWNSTL. The tract at residues 134–172 is disordered; sequence LKNNSNNNTSSGSSPNNSNSNSLDPRDQHVDMGGNSTSL. Residues 136 to 155 are compositionally biased toward low complexity; the sequence is NNSNNNTSSGSSPNNSNSNS.

In terms of tissue distribution, expressed specifically in fiber and vessel cells that are undergoing secondary wall thickening in floral stems. Expressed in vessels but not in xylary fibers in the developing secondary xylem of roots.

The protein resides in the nucleus. Transcription factor that acts as a molecular switch in the NAC012/SND1-mediated transcriptional network regulating secondary wall biosynthesis. Is directly activated by NAC012/SND1 and its close homologs, including NAC043/NST1, NAC066/NST2, NAC101/VND6 and NAC030/VND7. Is required for functional expression of a number of secondary wall-associated transcription factors and secondary wall biosynthetic genes involved in cellulose, xylan and lignin synthesis. Functions redundantly with MYB46 in the transcriptional regulatory cascade leading to secondary wall formation in fibers and vessels. Transcription activator that binds to the DNA consensus sequence 5'-ACC[AT]A[AC][TC]-3', designated as the secondary wall MYB-responsive element (SMRE). Regulates directly numerous transcription factors and a number of genes involved in secondary wall biosynthesis that contain SMRE elements in their promoters. This Arabidopsis thaliana (Mouse-ear cress) protein is Transcription factor MYB83.